We begin with the raw amino-acid sequence, 350 residues long: RNA 3'-terminal phosphate cyclase (350 aa).

ATP-binding positions include glutamine 100 and phenylalanine 290–glutamine 294. Histidine 314 acts as the Tele-AMP-histidine intermediate in catalysis.

It belongs to the RNA 3'-terminal cyclase family. Type 1 subfamily.

The protein localises to the cytoplasm. It carries out the reaction a 3'-end 3'-phospho-ribonucleotide-RNA + ATP = a 3'-end 2',3'-cyclophospho-ribonucleotide-RNA + AMP + diphosphate. Its function is as follows. Catalyzes the conversion of 3'-phosphate to a 2',3'-cyclic phosphodiester at the end of RNA. The mechanism of action of the enzyme occurs in 3 steps: (A) adenylation of the enzyme by ATP; (B) transfer of adenylate to an RNA-N3'P to produce RNA-N3'PP5'A; (C) and attack of the adjacent 2'-hydroxyl on the 3'-phosphorus in the diester linkage to produce the cyclic end product. The biological role of this enzyme is unknown but it is likely to function in some aspects of cellular RNA processing. The chain is RNA 3'-terminal phosphate cyclase from Thermococcus sibiricus (strain DSM 12597 / MM 739).